Reading from the N-terminus, the 299-residue chain is Tyrosine recombinase XerC (299 aa).

The region spanning 1–86 (MRNELLDFLE…AIRSLFKFLT (86 aa)) is the Core-binding (CB) domain. The region spanning 107–293 (KLPEFLSIEE…NQARMTEVYN (187 aa)) is the Tyr recombinase domain. Residues arginine 146, lysine 170, histidine 245, arginine 248, and histidine 271 contribute to the active site. Tyrosine 280 serves as the catalytic O-(3'-phospho-DNA)-tyrosine intermediate.

This sequence belongs to the 'phage' integrase family. XerC subfamily. As to quaternary structure, forms a cyclic heterotetrameric complex composed of two molecules of XerC and two molecules of XerD.

It localises to the cytoplasm. Its function is as follows. Site-specific tyrosine recombinase, which acts by catalyzing the cutting and rejoining of the recombining DNA molecules. The XerC-XerD complex is essential to convert dimers of the bacterial chromosome into monomers to permit their segregation at cell division. It also contributes to the segregational stability of plasmids. The chain is Tyrosine recombinase XerC from Natranaerobius thermophilus (strain ATCC BAA-1301 / DSM 18059 / JW/NM-WN-LF).